A 417-amino-acid chain; its full sequence is Zinc-finger homeodomain protein 4 (417 aa).

A compositionally biased stretch (polar residues) spans Met-1–Glu-12. Disordered stretches follow at residues Met-1–Ala-22 and Arg-31–Arg-50. Positions Ala-13–Ala-22 are enriched in low complexity. Residues Gln-36–Glu-46 show a composition bias toward acidic residues. Residues Tyr-145–Glu-194 form a ZF-HD dimerization-type; degenerate zinc finger. Disordered stretches follow at residues Asp-281–Lys-309 and Asn-361–Glu-417. The segment covering Ser-286 to Ser-298 has biased composition (gly residues). A DNA-binding region (homeobox) is located at residues Lys-303–Pro-366. A compositionally biased stretch (pro residues) spans Pro-368–Glu-417.

In terms of assembly, homo- and heterodimer with other ZFHD proteins.

It is found in the nucleus. Putative transcription factor. The chain is Zinc-finger homeodomain protein 4 (ZHD4) from Oryza sativa subsp. japonica (Rice).